A 160-amino-acid chain; its full sequence is Small ribosomal subunit protein uS7 (160 aa).

This sequence belongs to the universal ribosomal protein uS7 family. As to quaternary structure, part of the 30S ribosomal subunit. Contacts proteins S9 and S11.

Its function is as follows. One of the primary rRNA binding proteins, it binds directly to 16S rRNA where it nucleates assembly of the head domain of the 30S subunit. Is located at the subunit interface close to the decoding center, probably blocks exit of the E-site tRNA. The polypeptide is Small ribosomal subunit protein uS7 (Rickettsia rickettsii (strain Iowa)).